The sequence spans 159 residues: Large ribosomal subunit protein uL15 (159 aa).

Residues 1–46 (MKLNELSPSVPKKNRKRIGRGNSSGWGKTAGKGSNGQNSRAGGGVK) are disordered. The segment covering 22–34 (NSSGWGKTAGKGS) has biased composition (gly residues).

This sequence belongs to the universal ribosomal protein uL15 family. Part of the 50S ribosomal subunit.

Functionally, binds to the 23S rRNA. In Fusobacterium nucleatum subsp. nucleatum (strain ATCC 25586 / DSM 15643 / BCRC 10681 / CIP 101130 / JCM 8532 / KCTC 2640 / LMG 13131 / VPI 4355), this protein is Large ribosomal subunit protein uL15.